Consider the following 161-residue polypeptide: Phosphopantetheine adenylyltransferase (161 aa).

Thr9 contributes to the substrate binding site. ATP contacts are provided by residues 9 to 10 and His17; that span reads TF. Substrate is bound by residues Lys41, Leu73, and Arg87. ATP is bound by residues 88-90, Glu98, and 123-129; these read GLR and YQFISGT.

The protein belongs to the bacterial CoaD family. As to quaternary structure, homohexamer. The cofactor is Mg(2+).

It is found in the cytoplasm. The catalysed reaction is (R)-4'-phosphopantetheine + ATP + H(+) = 3'-dephospho-CoA + diphosphate. It functions in the pathway cofactor biosynthesis; coenzyme A biosynthesis; CoA from (R)-pantothenate: step 4/5. In terms of biological role, reversibly transfers an adenylyl group from ATP to 4'-phosphopantetheine, yielding dephospho-CoA (dPCoA) and pyrophosphate. The protein is Phosphopantetheine adenylyltransferase of Cupriavidus taiwanensis (strain DSM 17343 / BCRC 17206 / CCUG 44338 / CIP 107171 / LMG 19424 / R1) (Ralstonia taiwanensis (strain LMG 19424)).